A 506-amino-acid chain; its full sequence is Glycerol kinase (506 aa).

ADP is bound at residue T11. T11, S12, and S13 together coordinate ATP. T11 contributes to the sn-glycerol 3-phosphate binding site. Residue R15 coordinates ADP. Residues R81, E82, Y133, and D242 each contribute to the sn-glycerol 3-phosphate site. Glycerol contacts are provided by R81, E82, Y133, D242, and Q243. Residues T264 and G316 each coordinate ADP. The ATP site is built by T264, G316, Q320, and G421. Positions 421 and 425 each coordinate ADP.

Belongs to the FGGY kinase family.

It catalyses the reaction glycerol + ATP = sn-glycerol 3-phosphate + ADP + H(+). It functions in the pathway polyol metabolism; glycerol degradation via glycerol kinase pathway; sn-glycerol 3-phosphate from glycerol: step 1/1. Inhibited by fructose 1,6-bisphosphate (FBP). Functionally, key enzyme in the regulation of glycerol uptake and metabolism. Catalyzes the phosphorylation of glycerol to yield sn-glycerol 3-phosphate. The polypeptide is Glycerol kinase (Paracidovorax citrulli (strain AAC00-1) (Acidovorax citrulli)).